The primary structure comprises 331 residues: Probable tRNA pseudouridine synthase B (331 aa).

Over residues 1 to 15 (MRCSQREVFVKREEP) the composition is skewed to basic and acidic residues. The interval 1–27 (MRCSQREVFVKREEPTNPEWGKPPSQR) is disordered. The active-site Nucleophile is Asp-71. The region spanning 238–313 (LPKIWVRDSA…AVVRTDRVVM (76 aa)) is the PUA domain.

It belongs to the pseudouridine synthase TruB family. Type 2 subfamily.

The catalysed reaction is uridine(55) in tRNA = pseudouridine(55) in tRNA. Its function is as follows. Could be responsible for synthesis of pseudouridine from uracil-55 in the psi GC loop of transfer RNAs. The polypeptide is Probable tRNA pseudouridine synthase B (Pyrobaculum arsenaticum (strain DSM 13514 / JCM 11321 / PZ6)).